Consider the following 122-residue polypeptide: Semaphorin-like protein A43 (122 aa).

The 122-residue stretch at 1–122 folds into the Sema domain; the sequence is MIYLYTADNV…RIMYLFYEYH (122 aa).

The protein belongs to the semaphorin family.

The sequence is that of Semaphorin-like protein A43 (A43R) from Homo sapiens (Human).